Consider the following 609-residue polypeptide: UvrABC system protein C (609 aa).

The 79-residue stretch at 16–94 (SSPGVYRMYD…IKQYMPKYNV (79 aa)) folds into the GIY-YIG domain. The region spanning 203 to 238 (QQVTKALVAKMEQAAVELNYEQAARYRDQITALRRV) is the UVR domain.

This sequence belongs to the UvrC family. In terms of assembly, interacts with UvrB in an incision complex.

It localises to the cytoplasm. In terms of biological role, the UvrABC repair system catalyzes the recognition and processing of DNA lesions. UvrC both incises the 5' and 3' sides of the lesion. The N-terminal half is responsible for the 3' incision and the C-terminal half is responsible for the 5' incision. The sequence is that of UvrABC system protein C from Shewanella piezotolerans (strain WP3 / JCM 13877).